A 926-amino-acid chain; its full sequence is BTB/POZ domain-containing protein KCTD19 (926 aa).

One can recognise a BTB 1 domain in the interval 18–72 (NVGGWHFSVPRSKLSQFPDSLLWKEASALTSSESQRLFIDRDGSTFRHVHYYLYT). Position 270 is a phosphoserine (Ser-270). Residues 398–485 (IKVYVGSHWY…YHIPSLSEAL (88 aa)) form the BTB 2 domain. The tract at residues 673–751 (GSEAASQPST…PAPEQPLPEA (79 aa)) is disordered. Over residues 730–742 (DWSKQRTKERESP) the composition is skewed to basic and acidic residues.

In terms of assembly, identified in a complex with ZNF541, HDAC1 and HSPA2. Identified in a complex with ZNF541 and HDAC1. Identified in a complex with HDAC1, HDAC2, DNTTIP1 and ZNF541.

It localises to the nucleus. Functionally, transcription regulator which is essential for male fertility and for the completion of meiotic prophase in spermatocytes. Regulates progression of the pachytene stage of meiotic prophase and promotes the transcriptional activation activity ZNF541. Required for the organization of chromosomes during metaphase I. The polypeptide is BTB/POZ domain-containing protein KCTD19 (KCTD19) (Homo sapiens (Human)).